Here is a 1871-residue protein sequence, read N- to C-terminus: Girdin (1871 aa).

The Calponin-homology (CH) domain occupies 12–132; it reads QFMTSPLVTW…KLLLLLLGCA (121 aa). The stretch at 196–425 forms a coiled coil; it reads HLKRLIDERD…EMAQKQSMDE (230 aa). A phosphoserine mark is found at S233, S237, and S449. The stretch at 458–1385 forms a coiled coil; that stretch reads TSSRLLKLEM…KIMDQYKFYD (928 aa). Disordered regions lie at residues 816 to 842 and 1010 to 1035; these read ENKSLEQETSQLEKDKKQLEKENKRLR and RQDEERMVQSSPPISGEDNKWERESQ. A Phosphoserine modification is found at S1020. Over residues 1026–1035 the composition is skewed to basic and acidic residues; sequence EDNKWERESQ. Residue S1387 is modified to Phosphoserine. Positions 1390–1408 are phosphoinositide-binding; the sequence is RRRGNWITLKMRKLIKSKK. Residues 1407–1416 are compositionally biased toward basic and acidic residues; the sequence is KKDINRERQK. Disordered stretches follow at residues 1407–1459 and 1559–1601; these read KKDI…LGTK and TTSF…SNNN. Phosphoserine; by PKB/AKT1 is present on S1417. 3 stretches are compositionally biased toward polar residues: residues 1417 to 1430, 1445 to 1459, and 1559 to 1578; these read SLTLTPTRSDSSEG, VGSNSLEDGQTLGTK, and TTSFEDISPQGVSDDSSTGS. T1421 bears the Phosphothreonine mark. Residues 1672-1702 carry the GBA motif; it reads KTGSPGSEVVTLQQFLEESNKLTSVQIKSSS. Position 1673 is a phosphothreonine (T1673). The residue at position 1675 (S1675) is a Phosphoserine. At S1690 the chain carries Phosphoserine; by PKC/PRKCQ. The segment at 1713-1823 is SH2-like; required for interaction with growth factor receptors; it reads SLSVSSDFLG…GTTRRTSIHD (111 aa). S1717 bears the Phosphoserine mark. The segment at 1736–1871 is disordered; it reads SGKTPGDFYD…KSRSREQQSS (136 aa). Residues 1743-1763 are compositionally biased toward basic and acidic residues; the sequence is FYDRRTTKPEFLRPGPRKTED. Phosphotyrosine is present on residues Y1765 and Y1799. Composition is skewed to polar residues over residues 1787-1799 and 1807-1818; these read SSLSRQSKDSNPY and SVISTAEGTTRR. S1820 and S1837 each carry phosphoserine. Basic and acidic residues predominate over residues 1820 to 1830; the sequence is SIHDFLTKDSR. Residues 1838–1851 show a composition bias toward low complexity; sequence PPAAADSNTTAASN. Positions 1854–1871 are enriched in basic and acidic residues; that stretch reads KVQESRNSKSRSREQQSS.

The protein belongs to the CCDC88 family. Homodimer. Interacts (via GBA motif) with guanine nucleotide-binding protein G(i) alpha subunits GNAI1, GNAI2 and GNAI3. Also interacts (via GNA motif) with guanine nucleotide-binding protein G(s) alpha subunit GNAS. Interaction with G(i) alpha subunits occurs before interaction with GNAS and is regulated by phosphorylation; phosphorylation at Ser-1675 enhances binding to G(i) alpha subunits while phosphorylation at Ser-1690 abolishes G(i) alpha subunit binding, promoting binding to GNAS. Interacts (via C-terminal SH2-like region) with growth factor receptors EGFR, INSR and KDR/VEGFR2 (via their autophosphorylated cytoplasmic tails). Forms a complex with EGFR and GNAI3 which leads to enhanced EGFR signaling and triggering of cell migration; ligand stimulation is required for recruitment of GNAI3 to the complex. Interacts (tyrosine-phosphorylated form) with phosphatidylinositol 3-kinase (PI3K) regulatory subunit PIK3R1/p85a (via SH2 domains); the interaction enables recruitment of PIK3R1 to the EGFR receptor, enhancing PI3K activity and cell migration. Interacts with serine/threonine-protein kinase PRKCQ; the interaction leads to phosphorylation of CCDC88A and inhibition of its guanine nucleotide exchange factor activity. Interacts (via C-terminus) with DISC1; the interaction is direct. Interacts with AKT proteins; the interaction is inhibited in the presence of DISC1. Interacts with AKT1/PKB (via C-terminus). The non-phosphorylated form interacts with phosphatidylinositol 4-phosphate [PI(4)P] and weakly with phosphatidylinositol 3-phosphate [PI(3)P]. Interacts with microtubules. Interacts with actin. Phosphorylation is induced by epidermal growth factor (EGF) in a phosphoinositide 3-kinase (PI3K)-dependent manner. Phosphorylation by AKT1/PKB is necessary for delocalization from the cell membrane and for cell migration. Phosphorylated on tyrosine residues which promotes binding to phosphatidylinositol 3-kinase (PI3K) regulatory subunit PIK3R1/p85a and enhances PI3K activity. Tyrosine-phosphorylated by both receptor and non-receptor tyrosine kinases in vitro. Tyrosine phosphorylation is required for AKT1-dependent phosphorylation of Ser-1417. Phosphorylation at Ser-1690 by PRKCQ disrupts interaction with GNAI3 and inhibits guanine nucleotide exchange factor activity. Expressed ubiquitously.

The protein resides in the cell membrane. Its subcellular location is the cytoplasm. The protein localises to the cytosol. It localises to the cytoplasmic vesicle. It is found in the cell projection. The protein resides in the lamellipodium. Its subcellular location is the cytoskeleton. The protein localises to the cilium basal body. It localises to the microtubule organizing center. It is found in the centrosome. The protein resides in the centriole. Bifunctional modulator of guanine nucleotide-binding proteins (G proteins). Acts as a non-receptor guanine nucleotide exchange factor which binds to and activates guanine nucleotide-binding protein G(i) alpha subunits. Also acts as a guanine nucleotide dissociation inhibitor for guanine nucleotide-binding protein G(s) subunit alpha GNAS. Essential for cell migration. Interacts in complex with G(i) alpha subunits with the EGFR receptor, retaining EGFR at the cell membrane following ligand stimulation and promoting EGFR signaling which triggers cell migration. Binding to Gi-alpha subunits displaces the beta and gamma subunits from the heterotrimeric G-protein complex which enhances phosphoinositide 3-kinase (PI3K)-dependent phosphorylation and kinase activity of AKT1/PKB. Phosphorylation of AKT1/PKB induces the phosphorylation of downstream effectors GSK3 and FOXO1/FKHR, and regulates DNA replication and cell proliferation. Binds in its tyrosine-phosphorylated form to the phosphatidylinositol 3-kinase (PI3K) regulatory subunit PIK3R1 which enables recruitment of PIK3R1 to the EGFR receptor, enhancing PI3K activity and cell migration. Plays a role as a key modulator of the AKT-mTOR signaling pathway, controlling the tempo of the process of newborn neuron integration during adult neurogenesis, including correct neuron positioning, dendritic development and synapse formation. Inhibition of G(s) subunit alpha GNAS leads to reduced cellular levels of cAMP and suppression of cell proliferation. Essential for the integrity of the actin cytoskeleton. Required for formation of actin stress fibers and lamellipodia. May be involved in membrane sorting in the early endosome. Plays a role in ciliogenesis and cilium morphology and positioning and this may partly be through regulation of the localization of scaffolding protein CROCC/Rootletin. This chain is Girdin (CCDC88A), found in Homo sapiens (Human).